The following is a 277-amino-acid chain: Undecaprenyl-diphosphatase (277 aa).

The next 7 helical transmembrane spans lie at 5–25 (WTAA…FLPI), 44–64 (RAMA…VWEF), 86–106 (LNLL…ADTI), 110–130 (LFNA…MLWA), 184–204 (AATE…AVYS), 219–239 (VFAI…RALL), and 255–275 (IAFG…WASA).

Belongs to the UppP family.

The protein localises to the cell inner membrane. It carries out the reaction di-trans,octa-cis-undecaprenyl diphosphate + H2O = di-trans,octa-cis-undecaprenyl phosphate + phosphate + H(+). Its function is as follows. Catalyzes the dephosphorylation of undecaprenyl diphosphate (UPP). Confers resistance to bacitracin. The chain is Undecaprenyl-diphosphatase from Pseudomonas savastanoi pv. phaseolicola (strain 1448A / Race 6) (Pseudomonas syringae pv. phaseolicola (strain 1448A / Race 6)).